A 237-amino-acid polypeptide reads, in one-letter code: LexA repressor (237 aa).

Positions methionine 1 to asparagine 12 are enriched in polar residues. The disordered stretch occupies residues methionine 1–arginine 20. Positions isoleucine 41–lysine 61 form a DNA-binding region, H-T-H motif. A compositionally biased stretch (basic and acidic residues) spans glycine 67–aspartate 80. The interval glycine 67–threonine 112 is disordered. Residues serine 161 and lysine 198 each act as for autocatalytic cleavage activity in the active site.

The protein belongs to the peptidase S24 family. Homodimer.

The catalysed reaction is Hydrolysis of Ala-|-Gly bond in repressor LexA.. Represses a number of genes involved in the response to DNA damage (SOS response), including recA and lexA. In the presence of single-stranded DNA, RecA interacts with LexA causing an autocatalytic cleavage which disrupts the DNA-binding part of LexA, leading to derepression of the SOS regulon and eventually DNA repair. This chain is LexA repressor, found in Corynebacterium diphtheriae (strain ATCC 700971 / NCTC 13129 / Biotype gravis).